A 202-amino-acid polypeptide reads, in one-letter code: Small ribosomal subunit protein uS4c (202 aa).

Residues 90-153 form the S4 RNA-binding domain; the sequence is MRLDNIIFRL…KSEAIISKNI (64 aa).

The protein belongs to the universal ribosomal protein uS4 family. In terms of assembly, part of the 30S ribosomal subunit. Contacts protein S5. The interaction surface between S4 and S5 is involved in control of translational fidelity.

The protein localises to the plastid. The protein resides in the chloroplast. Functionally, one of the primary rRNA binding proteins, it binds directly to 16S rRNA where it nucleates assembly of the body of the 30S subunit. With S5 and S12 plays an important role in translational accuracy. The sequence is that of Small ribosomal subunit protein uS4c (rps4) from Hookeria lucens (Moss).